Consider the following 276-residue polypeptide: Large ribosomal subunit protein uL2 (276 aa).

Residues Thr219 to Lys276 form a disordered region.

This sequence belongs to the universal ribosomal protein uL2 family. As to quaternary structure, part of the 50S ribosomal subunit. Forms a bridge to the 30S subunit in the 70S ribosome.

One of the primary rRNA binding proteins. Required for association of the 30S and 50S subunits to form the 70S ribosome, for tRNA binding and peptide bond formation. It has been suggested to have peptidyltransferase activity; this is somewhat controversial. Makes several contacts with the 16S rRNA in the 70S ribosome. In Oceanobacillus iheyensis (strain DSM 14371 / CIP 107618 / JCM 11309 / KCTC 3954 / HTE831), this protein is Large ribosomal subunit protein uL2.